A 355-amino-acid polypeptide reads, in one-letter code: tRNA-specific 2-thiouridylase MnmA (355 aa).

ATP is bound by residues 6–13 (AMSGGVDS) and Met32. Cys93 serves as the catalytic Nucleophile. Cys93 and Cys191 are oxidised to a cystine. Gly117 contacts ATP. Positions 140–142 (KDQ) are interaction with tRNA. Cys191 serves as the catalytic Cysteine persulfide intermediate. The interaction with tRNA stretch occupies residues 296–297 (RY).

This sequence belongs to the MnmA/TRMU family.

It localises to the cytoplasm. The catalysed reaction is S-sulfanyl-L-cysteinyl-[protein] + uridine(34) in tRNA + AH2 + ATP = 2-thiouridine(34) in tRNA + L-cysteinyl-[protein] + A + AMP + diphosphate + H(+). Catalyzes the 2-thiolation of uridine at the wobble position (U34) of tRNA, leading to the formation of s(2)U34. In Pelobacter propionicus (strain DSM 2379 / NBRC 103807 / OttBd1), this protein is tRNA-specific 2-thiouridylase MnmA.